The chain runs to 591 residues: Aspartate--tRNA ligase (591 aa).

Residue E171 participates in L-aspartate binding. Residues 195–198 (QLFK) form an aspartate region. R217 contributes to the L-aspartate binding site. ATP contacts are provided by residues 217-219 (RDE) and Q226. H448 contributes to the L-aspartate binding site. Residue E482 participates in ATP binding. R489 is a binding site for L-aspartate. 534–537 (GLDR) is a binding site for ATP.

Belongs to the class-II aminoacyl-tRNA synthetase family. Type 1 subfamily. Homodimer.

It is found in the cytoplasm. It catalyses the reaction tRNA(Asp) + L-aspartate + ATP = L-aspartyl-tRNA(Asp) + AMP + diphosphate. Functionally, catalyzes the attachment of L-aspartate to tRNA(Asp) in a two-step reaction: L-aspartate is first activated by ATP to form Asp-AMP and then transferred to the acceptor end of tRNA(Asp). This is Aspartate--tRNA ligase from Aliivibrio fischeri (strain MJ11) (Vibrio fischeri).